Reading from the N-terminus, the 296-residue chain is GTP-binding protein GEM (296 aa).

Disordered regions lie at residues 1 to 20 (MTLN…PQQQ) and 37 to 68 (PHQY…SVIS). The segment covering 57-68 (SWSSDSTDSVIS) has biased composition (low complexity). Residues 82–89 (GEQGVGKS) and 191–194 (NKSD) each bind GTP. Residues 266–285 (ARRFWGKIVAKNNKNMAFKL) are calmodulin-binding.

This sequence belongs to the small GTPase superfamily. RGK family. As to quaternary structure, interacts with calmodulin in a Ca(2+)-dependent manner. Binds ROCK1. In terms of processing, phosphorylated on tyrosine residues. Most abundant in thymus, spleen, kidney, lung, and testis. Less abundant in heart, brain, liver and skeletal muscle.

Its subcellular location is the cell membrane. Functionally, could be a regulatory protein, possibly participating in receptor-mediated signal transduction at the plasma membrane. Has guanine nucleotide-binding activity but undetectable intrinsic GTPase activity. The sequence is that of GTP-binding protein GEM (GEM) from Homo sapiens (Human).